The sequence spans 708 residues: Outer capsid protein mu-1 (708 aa).

Glycine 2 carries N-myristoyl glycine; by host lipidation. N-linked (GlcNAc...) asparagine; by host glycans are attached at residues asparagine 3, asparagine 12, asparagine 81, asparagine 110, asparagine 458, asparagine 482, asparagine 528, and asparagine 659. The disordered stretch occupies residues 675-708; it reads PKPDCPTSGDSGESSNRRVKRDSYAGVVKRGYTR.

Belongs to the orthoreovirus mu-1 protein family. In terms of assembly, heterohexamer of three sigma-3 and three Mu-1 proteins. Cleaved during the endosomal proteolytic disassembly of the outer capsid. Mu-1 is proteolytically cleaved into mu-1N and mu-1C during the maturation step to generate the ISVP. Cleavage of mu-1 to mu-1C is dependent on myristoylation and binding to sigma-3 protein. Mu-1C is further cleaved into delta (59 kDa), and phi (13 kDa) segments during entry into the host cell cytoplasm. Post-translationally, mu-1 and mu-1N are N-terminally myristoylated. This acylation is essential for the membrane fusion activity.

It is found in the virion. Its subcellular location is the host cell membrane. The protein resides in the host endoplasmic reticulum. It localises to the host mitochondrion. Its function is as follows. Major outer capsid protein involved in host cell membrane penetration. In the endocytic compartment, outer-capsid protein sigma-3 is removed by cathepsin proteases, which exposes the viral membrane-penetration protein mu-1. Both myristoylated peptides mu-1N and phi are released during infectious subvirion particles (ISVP) formation in the endosome. They associate with host membranes and mu-1N induces permeabilization and delivery of transcriptionally active viral particles into the host cell cytoplasm. Seems to induce apoptosis in the host cell. Functionally, the viral outer shell polypeptides, of which mu-1 is one, impose structural constraints that prevent elongation of nascent transcripts by the RNA-dependent RNA polymerase lambda-3. The polypeptide is Outer capsid protein mu-1 (M2) (Mammalia (T3D)).